A 787-amino-acid chain; its full sequence is Longitudinals lacking protein, isoforms A/B/D/L (787 aa).

The BTB domain maps to 32 to 97; the sequence is VDCTLAAEGK…MYRGEVNISQ (66 aa). Disordered regions lie at residues 115 to 200, 228 to 340, 506 to 560, and 653 to 677; these read LSDN…SSVL, SSGP…ASAS, AKDV…SGGK, and TTGSGQSPSNSGHNNSAGGGSSVLG. Low complexity-rich tracts occupy residues 162–175, 228–251, 263–293, 329–340, 537–560, and 659–668; these read SGDVSGSREGSSSP, SSGPAAGTSSQASSTQQQQPLTST, TSSTAAPASGASASAAVQQAHLHQQQAQTTS, NSATGPNPASAS, HSSSNHSSNGNGSGKPTKTSSGGK, and SPSNSGHNNS. A C2H2-type 1; degenerate zinc finger spans residues 685–707; that stretch reads HPCPVCGRVYKLKSSLRNHQKWE. Residues 714–737 form a C2H2-type 2 zinc finger; it reads FQCPFCVYRAKQKMHIGRHMERMH.

In terms of assembly, isoform D interacts with JIL-1. By stage 11, isoform B is expressed throughout the mesoderm, whereas isoform A, isoform D and isoform L are expressed throughout the ectoderm. Expression becomes restricted during later stages; starting from stage 14 to 16, isoform B is expressed in muscle. Isoform A, isoform D, and at low levels isoform B, are expressed in the CNS. Expression is also seen in specific types of cells in the embryo; isoform A and isoform L are expressed in a dynamic pattern in the ventral neurogenic region starting at stage 7. Isoform L is expressed around the tracheal pits at stage 11.

The protein localises to the nucleus. Its function is as follows. Putative transcription factor required for axon growth and guidance in the central and peripheral nervous systems. Repels CNS axons away from the midline by promoting the expression of the midline repellent sli and its receptor robo. This Drosophila melanogaster (Fruit fly) protein is Longitudinals lacking protein, isoforms A/B/D/L.